The sequence spans 453 residues: Homogentisate 1,2-dioxygenase (453 aa).

H306 (proton acceptor) is an active-site residue. Fe cation-binding residues include H349 and E355. 2 residues coordinate homogentisate: Y364 and H385. H385 provides a ligand contact to Fe cation.

Belongs to the homogentisate dioxygenase family. In terms of assembly, hexamer; dimer of trimers. It depends on Fe cation as a cofactor.

The catalysed reaction is homogentisate + O2 = 4-maleylacetoacetate + H(+). It functions in the pathway amino-acid degradation; L-phenylalanine degradation; acetoacetate and fumarate from L-phenylalanine: step 4/6. Involved in the catabolism of homogentisate (2,5-dihydroxyphenylacetate or 2,5-OH-PhAc), a central intermediate in the degradation of phenylalanine and tyrosine. Catalyzes the oxidative ring cleavage of the aromatic ring of homogentisate to yield maleylacetoacetate. The polypeptide is Homogentisate 1,2-dioxygenase (Rhizobium rhizogenes (strain K84 / ATCC BAA-868) (Agrobacterium radiobacter)).